A 532-amino-acid chain; its full sequence is T-complex protein 1 subunit epsilon (532 aa).

It belongs to the TCP-1 chaperonin family. As to quaternary structure, component of the T-complex protein 1 (TCP1) complex.

It is found in the cytoplasm. Functionally, molecular chaperone; assists the folding of proteins upon ATP hydrolysis. The sequence is that of T-complex protein 1 subunit epsilon (CCT5) from Encephalitozoon cuniculi (strain GB-M1) (Microsporidian parasite).